A 282-amino-acid polypeptide reads, in one-letter code: Stress response regulator protein 1 (282 aa).

Low complexity-rich tracts occupy residues 12–30 (NLSRSSSPAAPPTTNHSST) and 45–58 (NSQSDSNSTQSNNN). Disordered regions lie at residues 12–31 (NLSRSSSPAAPPTTNHSSTV), 43–84 (DINS…DDED), and 112–139 (LTPFDGQTTSPQDSIISSKSSNKSTTVV). Positions 66–77 (SDYNSYTHNQYY) are enriched in polar residues. Low complexity predominate over residues 125-139 (SIISSKSSNKSTTVV). The 119-residue stretch at 155–273 (SFLIVDDNII…LDFMANSIDD (119 aa)) folds into the Response regulatory domain. At D206 the chain carries 4-aspartylphosphate.

Its function is as follows. Required for stress adaptation, morphogenesis and virulence. In Candida albicans (strain SC5314 / ATCC MYA-2876) (Yeast), this protein is Stress response regulator protein 1 (SRR1).